The primary structure comprises 105 residues: UPF0145 protein lpg0197 (105 aa).

This sequence belongs to the UPF0145 family.

This chain is UPF0145 protein lpg0197, found in Legionella pneumophila subsp. pneumophila (strain Philadelphia 1 / ATCC 33152 / DSM 7513).